A 195-amino-acid chain; its full sequence is Pyridoxal 5'-phosphate synthase subunit PdxT (195 aa).

49 to 51 (GES) is an L-glutamine binding site. The active-site Nucleophile is cysteine 81. L-glutamine-binding positions include arginine 113 and 141-142 (IR). Residues histidine 177 and glutamate 179 each act as charge relay system in the active site.

The protein belongs to the glutaminase PdxT/SNO family. As to quaternary structure, in the presence of PdxS, forms a dodecamer of heterodimers. Only shows activity in the heterodimer.

It carries out the reaction aldehydo-D-ribose 5-phosphate + D-glyceraldehyde 3-phosphate + L-glutamine = pyridoxal 5'-phosphate + L-glutamate + phosphate + 3 H2O + H(+). It catalyses the reaction L-glutamine + H2O = L-glutamate + NH4(+). It participates in cofactor biosynthesis; pyridoxal 5'-phosphate biosynthesis. In terms of biological role, catalyzes the hydrolysis of glutamine to glutamate and ammonia as part of the biosynthesis of pyridoxal 5'-phosphate. The resulting ammonia molecule is channeled to the active site of PdxS. The protein is Pyridoxal 5'-phosphate synthase subunit PdxT of Mycolicibacterium vanbaalenii (strain DSM 7251 / JCM 13017 / BCRC 16820 / KCTC 9966 / NRRL B-24157 / PYR-1) (Mycobacterium vanbaalenii).